The following is a 550-amino-acid chain: MGARASVLSGGELDRWEKIRLRPGGKKQYRLKHIVWASRKLERFAVNPGLLETSKGCRQILGQLQPSLQTGSEELRSLYNTVATLYCVHQRIEVRDTKEALDKIEEEQNKSKKKAQQAAADTGNSSQVSQNYPIVQNLQGQMVHQAISPRTLNAWVKVIEEKAFSPEVIPMFAALSEGATPQDLNTMLNTVGGHQAAMQMLKETINEEAAEWDRLHPVHAGPIAPGQMREPRGSDIAGTTSTLQEQIGWMTNNPPTPVGEIYKRWIILGLNKIVRMYSPISILDIRQGPKEPFRDYVDRFYKTLRAEQASQEVKNWMTETLLVQNANPDCKTILKALGPAATLEEMMTACQGVGGPGHKARVLAEAMSQVTNSATIMMQRGNFRRQGKTVKCFNCGKEGHIARNCKAPRKKGCWKCGREGHQMKDCTERQANFLREDLAFPQGKAREFSSEQTRANSPTRGELQVWGRDNNSLSEAGAERQGTVSFSFPQITLWQRPIVTIKIGGQLKEALLDTGADDTVLEEINLPGRWKPKMIGGIGGFIKVRQYDEV.

Glycine 2 carries the N-myristoyl glycine; by host lipid modification. The interaction with Gp41 stretch occupies residues 7–31 (VLSGGELDRWEKIRLRPGGKKQYRL). The interaction with host CALM1 stretch occupies residues 8–43 (LSGGELDRWEKIRLRPGGKKQYRLKHIVWASRKLER). Residues 12–19 (ELDRWEKI) are interaction with host AP3D1. The tract at residues 14–33 (DRWEKIRLRPGGKKQYRLKH) is interaction with membrane phosphatidylinositol 4,5-bisphosphate and RNA. The short motif at 16–22 (WEKIRLR) is the Nuclear export signal element. Positions 26–32 (KKQYRLK) match the Nuclear localization signal motif. The interval 73 to 77 (EELRS) is interaction with membrane phosphatidylinositol 4,5-bisphosphate. Positions 106–128 (EEQNKSKKKAQQAAADTGNSSQV) are disordered. A Phosphotyrosine; by host modification is found at tyrosine 132. Residues 189–227 (NTVGGHQAAMQMLKETINEEAAEWDRLHPVHAGPIAPGQ) are interaction with human PPIA/CYPA and NUP153. The dimerization/Multimerization of capsid protein p24 stretch occupies residues 277 to 363 (YSPISILDIR…GGPGHKARVL (87 aa)). CCHC-type zinc fingers lie at residues 390–407 (VKCF…NCKA) and 411–428 (KGCW…DCTE). Residues 444–464 (KAREFSSEQTRANSPTRGELQ) are disordered. Residues 450–459 (SEQTRANSPT) are compositionally biased toward polar residues. Residues 489-493 (PQITL) form a dimerization of protease region. In terms of domain architecture, Peptidase A2 spans 508–550 (KEALLDTGADDTVLEEINLPGRWKPKMIGGIGGFIKVRQYDEV). The active-site For protease activity; shared with dimeric partner is aspartate 513. The dimerization of protease stretch occupies residues 537–543 (GIGGFIK).

As to quaternary structure, homotrimer; further assembles as hexamers of trimers. Interacts with gp41 (via C-terminus). Interacts with host CALM1; this interaction induces a conformational change in the Matrix protein, triggering exposure of the myristate group. Interacts with host AP3D1; this interaction allows the polyprotein trafficking to multivesicular bodies during virus assembly. Part of the pre-integration complex (PIC) which is composed of viral genome, matrix protein, Vpr and integrase. Homodimer; the homodimer further multimerizes as homohexamers or homopentamers. Interacts with human PPIA/CYPA; This interaction stabilizes the capsid. Interacts with human NUP153. Interacts with host PDZD8; this interaction stabilizes the capsid. Interacts with monkey TRIM5; this interaction destabilizes the capsid. In terms of assembly, homodimer, whose active site consists of two apposed aspartic acid residues. Post-translationally, specific enzymatic cleavages by the viral protease yield mature proteins. The protease is released by autocatalytic cleavage. The polyprotein is cleaved during and after budding, this process is termed maturation. Proteolytic cleavage of p66 RT removes the RNase H domain to yield the p51 RT subunit. Nucleocapsid protein p7 might be further cleaved after virus entry. In terms of processing, tyrosine phosphorylated presumably in the virion by a host kinase. Phosphorylation is apparently not a major regulator of membrane association. Phosphorylated possibly by host MAPK1; this phosphorylation is necessary for Pin1-mediated virion uncoating. Post-translationally, methylated by host PRMT6, impairing its function by reducing RNA annealing and the initiation of reverse transcription.

The protein localises to the host cell membrane. It is found in the host endosome. Its subcellular location is the host multivesicular body. It localises to the virion membrane. The protein resides in the host nucleus. The protein localises to the host cytoplasm. It is found in the virion. It catalyses the reaction Specific for a P1 residue that is hydrophobic, and P1' variable, but often Pro.. Its activity is regulated as follows. The viral protease is inhibited by many synthetic protease inhibitors (PIs), such as amprenavir, atazanavir, indinavir, loprinavir, nelfinavir, ritonavir and saquinavir. Use of protease inhibitors in tritherapy regimens permit more ambitious therapeutic strategies. Its function is as follows. Mediates, with Gag polyprotein, the essential events in virion assembly, including binding the plasma membrane, making the protein-protein interactions necessary to create spherical particles, recruiting the viral Env proteins, and packaging the genomic RNA via direct interactions with the RNA packaging sequence (Psi). Gag-Pol polyprotein may regulate its own translation, by the binding genomic RNA in the 5'-UTR. At low concentration, the polyprotein would promote translation, whereas at high concentration, the polyprotein would encapsidate genomic RNA and then shut off translation. Functionally, targets the polyprotein to the plasma membrane via a multipartite membrane-binding signal, that includes its myristoylated N-terminus. Matrix protein is part of the pre-integration complex. Implicated in the release from host cell mediated by Vpu. Binds to RNA. In terms of biological role, forms the conical core that encapsulates the genomic RNA-nucleocapsid complex in the virion. Most core are conical, with only 7% tubular. The core is constituted by capsid protein hexamer subunits. The core is disassembled soon after virion entry. Host restriction factors such as TRIM5-alpha or TRIMCyp bind retroviral capsids and cause premature capsid disassembly, leading to blocks in reverse transcription. Capsid restriction by TRIM5 is one of the factors which restricts HIV-1 to the human species. Host PIN1 apparently facilitates the virion uncoating. On the other hand, interactions with PDZD8 or CYPA stabilize the capsid. Encapsulates and protects viral dimeric unspliced genomic RNA (gRNA). Binds these RNAs through its zinc fingers. Acts as a nucleic acid chaperone which is involved in rearangement of nucleic acid secondary structure during gRNA retrotranscription. Also facilitates template switch leading to recombination. As part of the polyprotein, participates in gRNA dimerization, packaging, tRNA incorporation and virion assembly. Its function is as follows. Aspartyl protease that mediates proteolytic cleavages of Gag and Gag-Pol polyproteins during or shortly after the release of the virion from the plasma membrane. Cleavages take place as an ordered, step-wise cascade to yield mature proteins. This process is called maturation. Displays maximal activity during the budding process just prior to particle release from the cell. Also cleaves Nef and Vif, probably concomitantly with viral structural proteins on maturation of virus particles. Hydrolyzes host EIF4GI and PABP1 in order to shut off the capped cellular mRNA translation. The resulting inhibition of cellular protein synthesis serves to ensure maximal viral gene expression and to evade host immune response. Also mediates cleavage of host YTHDF3. Mediates cleavage of host CARD8, thereby activating the CARD8 inflammasome, leading to the clearance of latent HIV-1 in patient CD4(+) T-cells after viral reactivation; in contrast, HIV-1 can evade CARD8-sensing when its protease remains inactive in infected cells prior to viral budding. This is Gag-Pol polyprotein (gag-pol) from Human immunodeficiency virus type 1 group M subtype B (isolate CDC-451) (HIV-1).